A 549-amino-acid polypeptide reads, in one-letter code: Exodeoxyribonuclease 7 large subunit (549 aa).

The segment at 511–549 is disordered; the sequence is LVATDPPVDPKPTRKPVQKSSSPKPSSRKPKKSQQEDLF.

It belongs to the XseA family. In terms of assembly, heterooligomer composed of large and small subunits.

The protein localises to the cytoplasm. The enzyme catalyses Exonucleolytic cleavage in either 5'- to 3'- or 3'- to 5'-direction to yield nucleoside 5'-phosphates.. Functionally, bidirectionally degrades single-stranded DNA into large acid-insoluble oligonucleotides, which are then degraded further into small acid-soluble oligonucleotides. The protein is Exodeoxyribonuclease 7 large subunit of Beijerinckia indica subsp. indica (strain ATCC 9039 / DSM 1715 / NCIMB 8712).